We begin with the raw amino-acid sequence, 189 residues long: Low affinity inorganic phosphate transporter 2 (189 aa).

Over 1–55 (TARYTALVAKDAKRAAADMGKVLHVEIDPEDAKVERMAKDESNQFGLFSWEFVRR) the chain is Cytoplasmic. A helical transmembrane segment spans residues 56–76 (HGLHLFGTCSTWFLLDIAFYS). Topologically, residues 77 to 111 (QNLFQKDVFTAIGWIPPAKTMNAVQEVYKIARAQT) are extracellular. A helical membrane pass occupies residues 112–132 (LIALCSTVPGYWFTVAFIDII). Residues 133–134 (GR) are Cytoplasmic-facing. Residues 135-155 (FAIQLMGFFFMTVFMFAIAIP) form a helical membrane-spanning segment. Residues 156–165 (YHHWTLQENR) are Extracellular-facing. A helical transmembrane segment spans residues 166–186 (IGFVIMYSLTFFFANFGPNAT). Residues 187-189 (TFV) lie on the Cytoplasmic side of the membrane.

This sequence belongs to the major facilitator superfamily. Phosphate:H(+) symporter (TC 2.A.1.9) family.

It localises to the cell membrane. The catalysed reaction is phosphate(in) + H(+)(in) = phosphate(out) + H(+)(out). Its function is as follows. Low-affinity transporter for external inorganic phosphate (Pi). The protein is Low affinity inorganic phosphate transporter 2 of Petunia hybrida (Petunia).